Consider the following 330-residue polypeptide: Flotillin-like protein FloA (330 aa).

2 consecutive transmembrane segments (helical) span residues Phe-5–Val-25 and Phe-27–Leu-47.

It belongs to the flotillin-like FloA family. As to quaternary structure, homooligomerizes.

It is found in the cell membrane. Its subcellular location is the membrane raft. Found in functional membrane microdomains (FMM) that may be equivalent to eukaryotic membrane rafts. FMMs are highly dynamic and increase in number as cells age. Flotillins are thought to be important factors in membrane fluidity. The polypeptide is Flotillin-like protein FloA (Parabacteroides distasonis (strain ATCC 8503 / DSM 20701 / CIP 104284 / JCM 5825 / NCTC 11152)).